An 85-amino-acid chain; its full sequence is Kappa-theraphotoxin-Cg1d (85 aa).

The first 21 residues, 1–21 (MKVSVLITLAVLGVMFVWASA), serve as a signal peptide directing secretion. The propeptide occupies 22 to 51 (AELEERGSDQRDSPAWLKSMERIFQSEERE). Intrachain disulfides connect Cys-52/Cys-66, Cys-59/Cys-71, and Cys-65/Cys-78.

This sequence belongs to the neurotoxin 10 (Hwtx-1) family. 28 (Jztx-11) subfamily. In terms of tissue distribution, expressed by the venom gland.

Its subcellular location is the secreted. Its function is as follows. Probable ion channel inhibitor. This chain is Kappa-theraphotoxin-Cg1d, found in Chilobrachys guangxiensis (Chinese earth tiger tarantula).